The sequence spans 143 residues: Putative pre-16S rRNA nuclease (143 aa).

This sequence belongs to the YqgF nuclease family.

It is found in the cytoplasm. Could be a nuclease involved in processing of the 5'-end of pre-16S rRNA. This Lactobacillus johnsonii (strain CNCM I-12250 / La1 / NCC 533) protein is Putative pre-16S rRNA nuclease.